A 468-amino-acid chain; its full sequence is Dimethylamine methyltransferase MtbB1 (468 aa).

Pyl-356 is a non-standard amino acid (pyrrolysine).

The protein belongs to the dimethylamine methyltransferase family.

The enzyme catalyses Co(I)-[dimethylamine-specific corrinoid protein] + dimethylamine + H(+) = methyl-Co(III)-[dimethylamine-specific corrinoid protein] + methylamine. The protein operates within one-carbon metabolism; methanogenesis from dimethylamine. Its function is as follows. Catalyzes the transfer of a methyl group from dimethylamine to the corrinoid cofactor of MtbC. The protein is Dimethylamine methyltransferase MtbB1 (mtbB1) of Methanosarcina mazei (strain ATCC BAA-159 / DSM 3647 / Goe1 / Go1 / JCM 11833 / OCM 88) (Methanosarcina frisia).